The primary structure comprises 294 residues: N-acetylmuramic acid 6-phosphate etherase (294 aa).

The SIS domain maps to 54–217; the sequence is VIKSFEEEGR…STASMIGVGK (164 aa). The Proton donor role is filled by Glu-82. Glu-113 is an active-site residue.

Belongs to the GCKR-like family. MurNAc-6-P etherase subfamily. As to quaternary structure, homodimer.

It carries out the reaction N-acetyl-D-muramate 6-phosphate + H2O = N-acetyl-D-glucosamine 6-phosphate + (R)-lactate. Its pathway is amino-sugar metabolism; N-acetylmuramate degradation. Specifically catalyzes the cleavage of the D-lactyl ether substituent of MurNAc 6-phosphate, producing GlcNAc 6-phosphate and D-lactate. In Bacillus cereus (strain G9842), this protein is N-acetylmuramic acid 6-phosphate etherase.